A 497-amino-acid chain; its full sequence is Glucose-6-phosphate isomerase (497 aa).

Residue glutamate 350 is the Proton donor of the active site. Residues histidine 381 and lysine 485 contribute to the active site.

This sequence belongs to the GPI family.

It is found in the cytoplasm. The enzyme catalyses alpha-D-glucose 6-phosphate = beta-D-fructose 6-phosphate. The protein operates within carbohydrate biosynthesis; gluconeogenesis. It participates in carbohydrate degradation; glycolysis; D-glyceraldehyde 3-phosphate and glycerone phosphate from D-glucose: step 2/4. In terms of biological role, catalyzes the reversible isomerization of glucose-6-phosphate to fructose-6-phosphate. This Legionella pneumophila protein is Glucose-6-phosphate isomerase.